Here is a 167-residue protein sequence, read N- to C-terminus: Ubiquitin-conjugating enzyme E2 14 (167 aa).

The residue at position 2 (alanine 2) is an N-acetylalanine. Positions 5–165 constitute a UBC core domain; that stretch reads QASLLLQKQL…VSRCVRRSQE (161 aa). The active-site Glycyl thioester intermediate is the cysteine 90.

It belongs to the ubiquitin-conjugating enzyme family.

It carries out the reaction S-ubiquitinyl-[E1 ubiquitin-activating enzyme]-L-cysteine + [E2 ubiquitin-conjugating enzyme]-L-cysteine = [E1 ubiquitin-activating enzyme]-L-cysteine + S-ubiquitinyl-[E2 ubiquitin-conjugating enzyme]-L-cysteine.. It participates in protein modification; protein ubiquitination. Accepts the ubiquitin from the E1 complex and catalyzes its covalent attachment to other proteins. Involved in the formation of multiubiquitin chains. Signal the protein for selective degradation. The chain is Ubiquitin-conjugating enzyme E2 14 (UBC14) from Arabidopsis thaliana (Mouse-ear cress).